Reading from the N-terminus, the 91-residue chain is Non-structural protein 3a (91 aa).

The N-terminal stretch at 1–19 is a signal peptide; it reads MVSFNATAILLVLVANAFS.

This chain is Non-structural protein 3a, found in Tylonycteris pachypus (Lesser bamboo bat).